The chain runs to 503 residues: Lysine--tRNA ligase (503 aa).

Mg(2+)-binding residues include E414 and E421.

It belongs to the class-II aminoacyl-tRNA synthetase family. In terms of assembly, homodimer. Requires Mg(2+) as cofactor.

Its subcellular location is the cytoplasm. It carries out the reaction tRNA(Lys) + L-lysine + ATP = L-lysyl-tRNA(Lys) + AMP + diphosphate. The chain is Lysine--tRNA ligase from Neisseria gonorrhoeae (strain NCCP11945).